The chain runs to 206 residues: Small ribosomal subunit protein uS4 (206 aa).

The region spanning R96–L161 is the S4 RNA-binding domain.

Belongs to the universal ribosomal protein uS4 family. Part of the 30S ribosomal subunit. Contacts protein S5. The interaction surface between S4 and S5 is involved in control of translational fidelity.

Functionally, one of the primary rRNA binding proteins, it binds directly to 16S rRNA where it nucleates assembly of the body of the 30S subunit. Its function is as follows. With S5 and S12 plays an important role in translational accuracy. The protein is Small ribosomal subunit protein uS4 of Legionella pneumophila (strain Paris).